A 73-amino-acid chain; its full sequence is U-scoloptoxin(15)-Sa1a (73 aa).

Positions 1–20 (MKFHIIFCLLAALMMTSAFA) are cleaved as a signal peptide.

The protein belongs to the scoloptoxin-15 family. In terms of processing, contains 2 disulfide bonds. As to expression, expressed by the venom gland.

It localises to the secreted. The polypeptide is U-scoloptoxin(15)-Sa1a (Scolopendra alternans (Florida Keys giant centipede)).